The chain runs to 439 residues: 5-methylthioadenosine/S-adenosylhomocysteine deaminase (439 aa).

Zn(2+) contacts are provided by His70 and His72. Residues Glu99 and His192 each coordinate substrate. His219 is a binding site for Zn(2+). Positions 222 and 307 each coordinate substrate. Asp307 serves as a coordination point for Zn(2+).

Belongs to the metallo-dependent hydrolases superfamily. MTA/SAH deaminase family. Requires Zn(2+) as cofactor.

The enzyme catalyses S-adenosyl-L-homocysteine + H2O + H(+) = S-inosyl-L-homocysteine + NH4(+). The catalysed reaction is S-methyl-5'-thioadenosine + H2O + H(+) = S-methyl-5'-thioinosine + NH4(+). Functionally, catalyzes the deamination of 5-methylthioadenosine and S-adenosyl-L-homocysteine into 5-methylthioinosine and S-inosyl-L-homocysteine, respectively. Is also able to deaminate adenosine. The sequence is that of 5-methylthioadenosine/S-adenosylhomocysteine deaminase from Thermodesulfovibrio yellowstonii (strain ATCC 51303 / DSM 11347 / YP87).